Reading from the N-terminus, the 250-residue chain is Capsid protein (250 aa).

The segment at 1–31 is disordered; the sequence is MPKRDAPWLMAGTSKVSRSGNYSPSGGMGSK. Positions 3-19 match the Bipartite nuclear localization signal motif; the sequence is KRDAPWLMAGTSKVSRS. Polar residues predominate over residues 14-31; the sequence is SKVSRSGNYSPSGGMGSK. The short motif at 34 to 48 is the Nuclear localization signal element; it reads KANAWVNRPMYRKPR. Residues 53–70 fold into a zinc finger; the sequence is YKSPDVPKGCEGPCKVQS. The short motif at 95-116 is the Nuclear export signal element; that stretch reads ITHRVGKRFCVKSVYILGKIWM. A Bipartite nuclear localization signal motif is present at residues 194–241; the sequence is RRFWKVNNHVVYNHQEAGKYENHTENALLLYMACTHASNPVYATLKIR.

Belongs to the geminiviridae capsid protein family. In terms of assembly, homomultimer. Binds to single-stranded and double-stranded viral DNA. Interacts (via nuclear localization signals) with host importin alpha-1a.

It is found in the virion. The protein localises to the host nucleus. Its function is as follows. Encapsidates the viral DNA into characteristic twinned ('geminate') particles. Binds the genomic viral ssDNA and shuttles it into and out of the cell nucleus. The CP of bipartite geminiviruses is not required for cell-to-cell or systemic movement. The protein is Capsid protein of Bean golden yellow mosaic virus (isolate Puerto Rico) (BGYMV).